An 851-amino-acid polypeptide reads, in one-letter code: DNA mismatch repair protein MutS (851 aa).

602 to 609 (GPNMSGKS) lines the ATP pocket.

The protein belongs to the DNA mismatch repair MutS family.

In terms of biological role, this protein is involved in the repair of mismatches in DNA. It is possible that it carries out the mismatch recognition step. This protein has a weak ATPase activity. In Streptococcus pyogenes serotype M12 (strain MGAS2096), this protein is DNA mismatch repair protein MutS.